Reading from the N-terminus, the 272-residue chain is Protein UL11 (272 aa).

The N-terminal stretch at 1 to 31 (MLFRYITFHREKVLYLTAACIFGVYISLHDA) is a signal peptide. The Extracellular portion of the chain corresponds to 32–224 (CIPVVGKIGT…PLQPSPQHQH (193 aa)). 4 N-linked (GlcNAc...) asparagine; by host glycosylation sites follow: Asn42, Asn93, Asn100, and Asn142. Positions 142–200 (NGTFPTTTTKKPTTTTRTTTTTTQRTTTTRTTTTAKKTTISTTHHKHPSPKKSTTPNSH) are disordered. Residues 147–183 (TTTTKKPTTTTRTTTTTTQRTTTTRTTTTAKKTTIST) show a composition bias toward low complexity. The chain crosses the membrane as a helical span at residues 225 to 245 (LATHALWVLAVVIVIIIIIIF). Topologically, residues 246–272 (YFRIPQKLWLLWQHDKHGIVLIPQTDL) are cytoplasmic.

This sequence belongs to the RL11 family. As to quaternary structure, interacts with host PTPRC; this interaction affects T-cell signaling. Post-translationally, glycosylated.

It localises to the host cell membrane. The protein localises to the host endoplasmic reticulum. Plays a role in the modulation of host immune response by modulating T-cell function. Interacts with host PTPRC/CD45 and thereby reduces host TCR signaling and T-cell proliferation. This is Protein UL11 (UL11) from Human cytomegalovirus (strain Merlin) (HHV-5).